Consider the following 75-residue polypeptide: Large ribosomal subunit protein bL28 (75 aa).

This sequence belongs to the bacterial ribosomal protein bL28 family.

This is Large ribosomal subunit protein bL28 from Baumannia cicadellinicola subsp. Homalodisca coagulata.